The primary structure comprises 497 residues: Cysteine--tRNA ligase (497 aa).

Cysteine 32 is a Zn(2+) binding site. A 'HIGH' region motif is present at residues 34–44; sequence PTVYGEGHLGH. The Zn(2+) site is built by cysteine 228, histidine 253, and glutamate 257. The 'KMSKS' region motif lies at 285-289; it reads KMGKS. Lysine 288 contacts ATP.

The protein belongs to the class-I aminoacyl-tRNA synthetase family. Monomer. Zn(2+) is required as a cofactor.

The protein resides in the cytoplasm. The enzyme catalyses tRNA(Cys) + L-cysteine + ATP = L-cysteinyl-tRNA(Cys) + AMP + diphosphate. The chain is Cysteine--tRNA ligase from Cytophaga hutchinsonii (strain ATCC 33406 / DSM 1761 / CIP 103989 / NBRC 15051 / NCIMB 9469 / D465).